The primary structure comprises 405 residues: Mucosal addressin cell adhesion molecule 1 (405 aa).

An N-terminal signal peptide occupies residues 1–21; it reads MESILALLLALALVPYQLSRG. 2 Ig-like domains span residues 22–109 and 110–227; these read QSFQ…ILVY and AFPD…TSPK. Over 22–364 the chain is Extracellular; that stretch reads QSFQVNPPES…PGQVTPNSSS (343 aa). 3 disulfides stabilise this stretch: C45-C91, C49-C95, and C132-C200. The mucin-like stretch occupies residues 221-257; it reads QSQTSPKPPNTTSAEPYILTSSSTAEAVSTGLNITTL. 2 N-linked (GlcNAc...) asparagine glycosylation sites follow: N230 and N253. Residues 255–275 form a disordered region; it reads TTLPSAPPYPKLSPRTLSSEG. Residues 258-357 form the Ig-like 3 domain; sequence PSAPPYPKLS…EVTNLYVPGQ (100 aa). C293 and C341 are joined by a disulfide. N-linked (GlcNAc...) asparagine glycosylation is present at N361. Residues 365 to 385 form a helical membrane-spanning segment; it reads TVVLWIGSLVLGLLALVFLAY. At 386–405 the chain is on the cytoplasmic side; that stretch reads RLWKCYRPGPRPDTSSCTHL.

Homodimer. In terms of processing, O-glycosylated; contains syalic acid. The Ser/Thr-rich mucin-like domain may provide possible sites for O-glycosylation. In terms of tissue distribution, highly expressed on high endothelial venules (HEV) of organized intestinal lymphoid tissues like the Peyer patches and mesenteric lymph nodes, and in the lamina propria of the intestine. Some expression found in the spleen, and low levels of expression in the peripheral lymph nodes and the lactating mammary gland. No expression was detected in the liver, kidneys, lungs or in normal brain. Expressed as well in brain endothelioma cells, and mucosal tissues which are in a chronic state of inflammation, such as inflamed pancreas.

It is found in the membrane. Cell adhesion leukocyte receptor expressed by mucosal venules, helps to direct lymphocyte traffic into mucosal tissues including the Peyer patches and the intestinal lamina propria. It can bind both the integrin alpha-4/beta-7 and L-selectin, regulating both the passage and retention of leukocytes. Both isoform 1 and isoform 2 can adhere to integrin alpha-4/beta-7. Isoform 2, lacking the mucin-like domain, may be specialized in supporting integrin alpha-4/beta-7-dependent adhesion strengthening, independent of L-selectin binding. This chain is Mucosal addressin cell adhesion molecule 1 (Madcam1), found in Mus musculus (Mouse).